Here is an 83-residue protein sequence, read N- to C-terminus: RNA-binding protein Hfq (83 aa).

Positions 10–69 (DPFLNALRREHVPVSIYLVNGIKLQGQIESFDQYVVLLRNTVTQMVYKHAISTIVPGRAV) constitute a Sm domain.

It belongs to the Hfq family. Homohexamer.

RNA chaperone that binds small regulatory RNA (sRNAs) and mRNAs to facilitate mRNA translational regulation in response to envelope stress, environmental stress and changes in metabolite concentrations. Also binds with high specificity to tRNAs. The protein is RNA-binding protein Hfq of Paracidovorax citrulli (strain AAC00-1) (Acidovorax citrulli).